A 294-amino-acid chain; its full sequence is NADH-cytochrome b5 reductase 1 (294 aa).

A helical membrane pass occupies residues 13 to 33 (PHASFLGGLVVAAILGLFIFF). An FAD-binding FR-type domain is found at 44-147 (VEWRSFKLVD…KGPKGKFVYT (104 aa)). Residues 127–142 (SLLT…GPKG) and 153–185 (HLVM…RLSL) contribute to the FAD site.

This sequence belongs to the flavoprotein pyridine nucleotide cytochrome reductase family. As to quaternary structure, monomer. Component of the 2-(3-amino-3-carboxypropyl)histidine synthase complex composed of DPH1, DPH2, DPH3 and a NADH-dependent reductase, predominantly CBR1. The cofactor is FAD.

It localises to the mitochondrion outer membrane. It carries out the reaction 2 Fe(III)-[cytochrome b5] + NADH = 2 Fe(II)-[cytochrome b5] + NAD(+) + H(+). It catalyses the reaction 2 Fe(3+)-[Dph3] + NADH = 2 Fe(2+)-[Dph3] + NAD(+) + H(+). Its pathway is protein modification; peptidyl-diphthamide biosynthesis. NADH-dependent reductase for DPH3 and cytochrome b5. Required for the first step of diphthamide biosynthesis, a post-translational modification of histidine which occurs in elongation factor 2. DPH1 and DPH2 transfer a 3-amino-3-carboxypropyl (ACP) group from S-adenosyl-L-methionine (SAM) to a histidine residue, the reaction is assisted by a reduction system comprising DPH3 and a NADH-dependent reductase, predominantly CBR1. By reducing DPH3, also involved in the formation of the tRNA wobble base modification mcm5s 2U (5-methoxycarbonylmethyl-2-thiouridine), mediated by the elongator complex. The cytochrome b5/NADH cytochrome b5 reductase electron transfer system supports the catalytic activity of several sterol biosynthetic enzymes. This Cryptococcus neoformans var. neoformans serotype D (strain B-3501A) (Filobasidiella neoformans) protein is NADH-cytochrome b5 reductase 1 (CBR1).